A 304-amino-acid chain; its full sequence is Proline dehydrogenase 2 (304 aa).

Lysine 97 contributes to the substrate binding site. Aspartate 131 is a catalytic residue. Residues methionine 132 and glutamine 160 each contribute to the FAD site. The active site involves arginine 181. FAD contacts are provided by residues 184–186 and 223–224; these read KGA and TH. 285–286 is a substrate binding site; that stretch reads RR.

This sequence belongs to the proline dehydrogenase family. FAD is required as a cofactor.

It catalyses the reaction L-proline + a quinone = (S)-1-pyrroline-5-carboxylate + a quinol + H(+). The protein operates within amino-acid degradation; L-proline degradation into L-glutamate; L-glutamate from L-proline: step 1/2. In terms of biological role, converts proline to delta-1-pyrroline-5-carboxylate. The polypeptide is Proline dehydrogenase 2 (Bacillus subtilis subsp. natto).